We begin with the raw amino-acid sequence, 370 residues long: MTKVLIVDDSALMRRHLKEILEVHGGFEVMVARNGIEALAGLESFDPDVITLDINMPEMDGLTCLSRIMATKPKPVVMVSSLTETGAEVTLEALALGAVDFIHKPDGTISLNVSRIEREILDKVTAAAKARIRRSLGLSSRLRTASDRGAAKRTRPADSSPLPTLSLTEIGVVLIGVSTGGPGTLEEVLPGLSAGFPWPVVVAQHMPGSFTPVFARRLNDLCPLTVIEASAQMPLEPGVIYIAKGDADVVIGHRATRFVVNPMPAGPHYLWHPSVTRLVESALRALPPERIIGVLLTGMGDDGAEAMAEVKRRGGRTIAQDEASSVIFGMPGELVKRGGANLVLPASRIAGQLNAWMSRTKETVYGTGQS.

Residues 3 to 119 form the Response regulatory domain; the sequence is KVLIVDDSAL…SLNVSRIERE (117 aa). 4-aspartylphosphate is present on Asp-53. The CheB-type methylesterase domain maps to 166–360; sequence SLTEIGVVLI…GQLNAWMSRT (195 aa). Catalysis depends on residues Ser-178, His-205, and Asp-302.

Belongs to the CheB family. Phosphorylated by CheA. Phosphorylation of the N-terminal regulatory domain activates the methylesterase activity.

Its subcellular location is the cytoplasm. It catalyses the reaction [protein]-L-glutamate 5-O-methyl ester + H2O = L-glutamyl-[protein] + methanol + H(+). It carries out the reaction L-glutaminyl-[protein] + H2O = L-glutamyl-[protein] + NH4(+). Involved in chemotaxis. Part of a chemotaxis signal transduction system that modulates chemotaxis in response to various stimuli. Catalyzes the demethylation of specific methylglutamate residues introduced into the chemoreceptors (methyl-accepting chemotaxis proteins or MCP) by CheR. Also mediates the irreversible deamidation of specific glutamine residues to glutamic acid. This is Protein-glutamate methylesterase/protein-glutamine glutaminase 3 from Rhodospirillum rubrum (strain ATCC 11170 / ATH 1.1.1 / DSM 467 / LMG 4362 / NCIMB 8255 / S1).